A 186-amino-acid polypeptide reads, in one-letter code: C-type lectin domain family 19 member A (186 aa).

Positions M1–A19 are cleaved as a signal peptide. The C-type lectin domain maps to F47–K179. N58 carries an N-linked (GlcNAc...) asparagine glycan. Cystine bridges form between C68–C178 and C151–C170.

It is found in the secreted. The protein is C-type lectin domain family 19 member A of Homo sapiens (Human).